The sequence spans 161 residues: MFSLTKSVLFTSIVAIAAQATTAVSSPTQTSLPGLASQVPNCVAVCLRNLHESIGCDVGDIVCLCKSKASLISKVGLCVVGSQCDFEDASSSTDIVRDMCDLVAEDPGTAVIASASKVLDAVVASATTSDIEAPTSTNAAGLVAYDVVKVVVVGAAAAIAI.

Residues 1-23 form the signal peptide; that stretch reads MFSLTKSVLFTSIVAIAAQATTA. One can recognise a CFEM domain in the interval 24–126; sequence VSSPTQTSLP…KVLDAVVASA (103 aa). 3 disulfides stabilise this stretch: Cys46-Cys78, Cys56-Cys63, and Cys65-Cys100. Residue Asp60 coordinates heme.

Belongs to the RBT5 family. In terms of assembly, interacts with Z.mays LRR5; the interaction is direct. Interacts with Z.mays WAK17 isoform 2; the interaction is direct.

The protein resides in the membrane. It localises to the secreted. Functionally, suppresses host programmed cell death during infection by binding to Z.mays WAK17 isoform 2 and Z.mays LRR5, to prevent activation of Z.mays WAK17 isoform 1 and the downstream hypersensitive response. This chain is Effector CFEM5, found in Gibberella zeae (strain ATCC MYA-4620 / CBS 123657 / FGSC 9075 / NRRL 31084 / PH-1) (Wheat head blight fungus).